Reading from the N-terminus, the 138-residue chain is Fluoride-specific ion channel FluC (138 aa).

Helical transmembrane passes span 34 to 54 (FMPKLWEGLSVGAGAAVGACA), 60 to 80 (MQFGEGLWPILAINMLGSFLM), 88 to 108 (FWGTGVLGGFTTFSAFAVVLV), and 112 to 132 (LPHAVAYLTVTVVSCVAAWLM). Na(+)-binding residues include G95 and T98.

The protein belongs to the fluoride channel Fluc/FEX (TC 1.A.43) family.

The protein localises to the cell membrane. The enzyme catalyses fluoride(in) = fluoride(out). Its activity is regulated as follows. Na(+) is not transported, but it plays an essential structural role and its presence is essential for fluoride channel function. Its function is as follows. Fluoride-specific ion channel. Important for reducing fluoride concentration in the cell, thus reducing its toxicity. The chain is Fluoride-specific ion channel FluC from Corynebacterium efficiens (strain DSM 44549 / YS-314 / AJ 12310 / JCM 11189 / NBRC 100395).